A 709-amino-acid chain; its full sequence is Homeobox-leucine zipper protein HDG4 (709 aa).

The interval 61–92 (ESGSGKSTGSGHDPVENTAIEQEPPAAKKKRY) is disordered. Positions 88–147 (KKKRYHRHTASQIQQMEALFKENAHPDTKTRLRLSKKLGLSPIQVKFWFQNKRTQIKAQQ) form a DNA-binding region, homeobox. Residues 137–205 (QNKRTQIKAQ…LDRLRSIVSM (69 aa)) adopt a coiled-coil conformation. The START domain occupies 229–466 (AEEEKAIDME…LKRQCERMAS (238 aa)).

It belongs to the HD-ZIP homeobox family. Class IV subfamily. As to expression, expressed in flowers.

The protein localises to the nucleus. Probable transcription factor. The sequence is that of Homeobox-leucine zipper protein HDG4 from Arabidopsis thaliana (Mouse-ear cress).